The primary structure comprises 914 residues: Eukaryotic initiation factor 4F subunit p130 (914 aa).

Residues 1–12 (MTDQRGPPPPHP) show a composition bias toward pro residues. Disordered stretches follow at residues 1–84 (MTDQ…YNNR), 128–205 (PPYT…NEAV), 240–351 (ERKK…VNKS), and 457–535 (IARN…LVPS). The segment covering 26-44 (NQYSGANNSQPNNHYNENL) has biased composition (polar residues). A compositionally biased stretch (low complexity) spans 59–73 (KNGKYGTNKYNNRNN). Serine 74 bears the Phosphoserine mark. The span at 145–155 (PKTTKIEITTK) shows a compositional bias: low complexity. Positions 156–195 (TGERLNLKKFHEEKKASKGEEKNDGVEQKSKSGTPFEKEA) are enriched in basic and acidic residues. Position 196 is a phosphothreonine (threonine 196). Residues 201-315 (ANEAVKDTLT…TGSVTKSVTF (115 aa)) form an interaction with PAB1 region. Over residues 240–263 (ERKKNGLISETEKKQETSNHDNTD) the composition is skewed to basic and acidic residues. Polar residues-rich tracts occupy residues 298-325 (SVKT…SSSQ) and 339-348 (ISDTTGGKTV). A Phosphothreonine modification is found at threonine 301. Basic and acidic residues predominate over residues 496–529 (RMGDDRRSNRGYTSRKDREKAAEKAEEQAPKEEI). Serine 503 carries the post-translational modification Phosphoserine. The MIF4G domain occupies 567-810 (ERKMKSLLNK…IDVKELREIK (244 aa)). Positions 833–914 (QLRQKKNSQR…ALMNNDGDSD (82 aa)) are disordered. Low complexity predominate over residues 841–867 (QRSNSRFNNHNQSNSNRYSSNRRNMQN). The segment covering 868 to 886 (TQRDSFASTKTGSFRNNQR) has biased composition (polar residues). Serine 913 carries the phosphoserine modification.

This sequence belongs to the eukaryotic initiation factor 4G family. Component of the eIF4F complex, which composition varies with external and internal environmental conditions. It is composed of at least eIF4A (TIF1/TIF2), eIF4E (TIF45) and eIF4G (TIF4631 or TIF4632). Interacts with PAT1 in a RNA-dependent manner.

The protein resides in the cytoplasm. In terms of biological role, component of the eIF4F complex, which interacts with the mRNA cap structure and serves as an initial point of assembly for the translation apparatus. Stimulates translation by interaction with polyadenylate-binding protein PAB1, bringing the 5'- and 3'-ends of the mRNA in proximity. The formation of this circular mRNP structure appears to be critical for the synergistic effects of the cap and the poly(A) tail in facilitating translation initiation, recycling of ribosomes, and mRNA stability. TIF4632 is probably essential when TIF4631 is missing. In Saccharomyces cerevisiae (strain ATCC 204508 / S288c) (Baker's yeast), this protein is Eukaryotic initiation factor 4F subunit p130.